The sequence spans 537 residues: Woronin body major protein hexA (537 aa).

Basic and acidic residues-rich tracts occupy residues 1–17 (MYSV…RDAQ), 59–70 (DRTSHVEREDTR), and 116–134 (DSRV…RSEN). Disordered regions lie at residues 1 to 20 (MYSV…QRTA), 59 to 79 (DRTS…PDPR), 116 to 200 (DSRV…KPVY), and 269 to 295 (PKPL…SRPS). Low complexity predominate over residues 135–144 (NAKQNKNKNN). Residues 272-281 (LETRKGDSFS) are compositionally biased toward basic and acidic residues.

The protein belongs to the eIF-5A family. Hex1 subfamily. In terms of assembly, forms oligomers. Self-assembles into hexagonal rods. Binds directly or indirectly to the Woronin body tether lah.

It localises to the cell septum. Its subcellular location is the cytoplasm. Functionally, major component of Woronin bodies, fungal-specific organelles that occlude septal pores in order to separate intact from damaged compartments. HexA binds directly or indirectly to the Woronin body tether that in turn is anchored at the rim of the septal pore. Woronin bodies are important for stress resistance and virulence. This is Woronin body major protein hexA from Aspergillus fumigatus (strain ATCC MYA-4609 / CBS 101355 / FGSC A1100 / Af293) (Neosartorya fumigata).